The sequence spans 257 residues: Acetylglutamate kinase (257 aa).

Residues 43 to 44 (GG), Arg65, and Asn157 contribute to the substrate site. Residues 180–185 (DVSGIL) and 208–210 (IIT) each bind ATP.

This sequence belongs to the acetylglutamate kinase family. ArgB subfamily. As to quaternary structure, homodimer.

The protein resides in the cytoplasm. The catalysed reaction is N-acetyl-L-glutamate + ATP = N-acetyl-L-glutamyl 5-phosphate + ADP. It participates in amino-acid biosynthesis; L-arginine biosynthesis; N(2)-acetyl-L-ornithine from L-glutamate: step 2/4. Its function is as follows. Catalyzes the ATP-dependent phosphorylation of N-acetyl-L-glutamate. The chain is Acetylglutamate kinase from Enterobacter sp. (strain 638).